Consider the following 489-residue polypeptide: N-succinylglutamate 5-semialdehyde dehydrogenase (489 aa).

223–228 (GSSRTG) lines the NAD(+) pocket. Residues glutamate 246 and cysteine 280 contribute to the active site.

It belongs to the aldehyde dehydrogenase family. AstD subfamily.

It catalyses the reaction N-succinyl-L-glutamate 5-semialdehyde + NAD(+) + H2O = N-succinyl-L-glutamate + NADH + 2 H(+). Its pathway is amino-acid degradation; L-arginine degradation via AST pathway; L-glutamate and succinate from L-arginine: step 4/5. Its function is as follows. Catalyzes the NAD-dependent reduction of succinylglutamate semialdehyde into succinylglutamate. The chain is N-succinylglutamate 5-semialdehyde dehydrogenase from Aeromonas salmonicida (strain A449).